The primary structure comprises 1023 residues: Sodium/potassium-transporting ATPase subunit alpha-1 (1023 aa).

The propeptide occupies 1–5 (MGKGV). Basic and acidic residues predominate over residues 1 to 11 (MGKGVGRDKYE). The tract at residues 1–39 (MGKGVGRDKYEPAAVSEQGDKKGKKGKKDRDMDELKKEV) is disordered. Over 6-87 (GRDKYEPAAV…NALTPPPTTP (82 aa)) the chain is Cytoplasmic. N6-acetyllysine is present on K9. Y10 bears the Phosphotyrosine mark. Residue S16 is modified to Phosphoserine. At K21 the chain carries N6-acetyllysine. Residues 28-39 (KDRDMDELKKEV) show a composition bias toward basic and acidic residues. Phosphoserine is present on residues S40 and S47. Residues 82 to 84 (PPP) are phosphoinositide-3 kinase binding. A helical membrane pass occupies residues 88–108 (EWIKFCRQLFGGFSMLLWIGA). At 109-131 (ILCFLAYSIQAATEEEPQNDNLY) the chain is on the extracellular side. A helical transmembrane segment spans residues 132–152 (LGVVLSAVVIITGCFSYYQEA). Over 153-288 (KSSKIMESFK…GGQTPIAAEI (136 aa)) the chain is Cytoplasmic. The disordered stretch occupies residues 216–235 (SSLTGESEPQTRSPDFTNEN). A Phosphoserine modification is found at S228. Y260 bears the Phosphotyrosine mark. A helical membrane pass occupies residues 289-308 (EHFIHIITGVAVFLGVSFFI). At 309–320 (LSLILEYTWLEA) the chain is on the extracellular side. The helical transmembrane segment at 321 to 338 (VIFLIGIIVANVPEGLLA) threads the bilayer. Residues 339 to 772 (TVTVCLTLTA…EEGRLIFDNL (434 aa)) lie on the Cytoplasmic side of the membrane. The active-site 4-aspartylphosphate intermediate is D376. Residues S452 and S484 each carry the phosphoserine modification. K487 contacts ATP. Residue Y542 is modified to Phosphotyrosine. The tract at residues 596–717 (RAAVPDAVGK…QGAIVAVTGD (122 aa)) is mediates interaction with SCN7A. K661 is subject to N6-succinyllysine. 2 positions are modified to phosphoserine: S668 and S675. The Mg(2+) site is built by D717 and D721. A helical transmembrane segment spans residues 773–792 (KKSIAYTLTSNIPEITPFLI). Over 793 to 802 (FIIANIPLPL) the chain is Extracellular. A helical membrane pass occupies residues 803–823 (GTVTILCIDLGTDMVPAISLA). Topologically, residues 824–843 (YEQAESDIMKRQPRNPKTDK) are cytoplasmic. A helical transmembrane segment spans residues 844–866 (LVNERLISMAYGQIGMIQALGGF). Topologically, residues 867–918 (FTYFVILAENGFLPIHLLGLRVDWDDRWINDVEDSYGQQWTYEQRKIVEFTC) are extracellular. Residues 919-938 (HTAFFVSIVVVQWADLVICK) form a helical membrane-spanning segment. Residues 939-951 (TRRNSVFQQGMKN) lie on the Cytoplasmic side of the membrane. A Phosphoserine; by PKA modification is found at S943. Residues 952–970 (KILIFGLFEETALAAFLSY) traverse the membrane as a helical segment. Residues 971–985 (CPGMGVALRMYPLKP) are Extracellular-facing. The chain crosses the membrane as a helical span at residues 986-1006 (TWWFCAFPYSLLIFVYDEVRK). The Cytoplasmic portion of the chain corresponds to 1007 to 1023 (LIIRRRPGGWVEKETYY).

This sequence belongs to the cation transport ATPase (P-type) (TC 3.A.3) family. Type IIC subfamily. The sodium/potassium-transporting ATPase is composed of a catalytic alpha subunit, an auxiliary non-catalytic beta subunit and an additional regulatory subunit. Interacts with regulatory subunit FXYD1. Interacts with regulatory subunit FXYD3. Interacts with SIK1. Binds the HLA class II histocompatibility antigen DR1. Interacts with SLC35G1 and STIM1. Interacts with CLN3; this interaction regulates the sodium/potassium-transporting ATPase complex localization at the plasma membrane. Interacts with SCN7A; activates ATP1A1 P-type sodium:potassium-exchanging transporter activity which indirectly signals to nearby neurons to regulate sodium homeostasis. Post-translationally, phosphorylation on Tyr-10 modulates pumping activity. Phosphorylation of Ser-943 by PKA modulates the response of ATP1A1 to PKC. Dephosphorylation by protein phosphatase 2A (PP2A) following increases in intracellular sodium, leading to increase catalytic activity.

It is found in the cell membrane. Its subcellular location is the basolateral cell membrane. The protein localises to the sarcolemma. It localises to the cell projection. The protein resides in the axon. It is found in the melanosome. The enzyme catalyses K(+)(out) + Na(+)(in) + ATP + H2O = K(+)(in) + Na(+)(out) + ADP + phosphate + H(+). Functionally, this is the catalytic component of the active enzyme, which catalyzes the hydrolysis of ATP coupled with the exchange of sodium and potassium ions across the plasma membrane. This action creates the electrochemical gradient of sodium and potassium ions, providing the energy for active transport of various nutrients. Could also be part of an osmosensory signaling pathway that senses body-fluid sodium levels and controls salt intake behavior as well as voluntary water intake to regulate sodium homeostasis. The sequence is that of Sodium/potassium-transporting ATPase subunit alpha-1 (ATP1A1) from Homo sapiens (Human).